The following is a 735-amino-acid chain: Catalase-peroxidase (735 aa).

Positions 97-220 (WHAAGTYRIG…LAAVQMGLIY (124 aa)) form a cross-link, tryptophyl-tyrosyl-methioninium (Trp-Tyr) (with M-246). The active-site Proton acceptor is His98. The tryptophyl-tyrosyl-methioninium (Tyr-Met) (with W-97) cross-link spans 220 to 246 (YVNPEGPNGKPDPMAAAHDIRETFGRM). His261 serves as a coordination point for heme b. The segment at 342–362 (AHQWTPKNPEAASTVPDAHDP) is disordered.

The protein belongs to the peroxidase family. Peroxidase/catalase subfamily. As to quaternary structure, homodimer or homotetramer. Requires heme b as cofactor. Formation of the three residue Trp-Tyr-Met cross-link is important for the catalase, but not the peroxidase activity of the enzyme.

The catalysed reaction is H2O2 + AH2 = A + 2 H2O. The enzyme catalyses 2 H2O2 = O2 + 2 H2O. Bifunctional enzyme with both catalase and broad-spectrum peroxidase activity. The chain is Catalase-peroxidase from Gloeobacter violaceus (strain ATCC 29082 / PCC 7421).